The following is a 362-amino-acid chain: UDP-N-acetylglucosamine--N-acetylmuramyl-(pentapeptide) pyrophosphoryl-undecaprenol N-acetylglucosamine transferase (362 aa).

Residues Thr-14–Gly-16, Asn-126, Arg-166, Ser-193, and Gln-294 each bind UDP-N-acetyl-alpha-D-glucosamine.

Belongs to the glycosyltransferase 28 family. MurG subfamily.

Its subcellular location is the cell inner membrane. The enzyme catalyses di-trans,octa-cis-undecaprenyl diphospho-N-acetyl-alpha-D-muramoyl-L-alanyl-D-glutamyl-meso-2,6-diaminopimeloyl-D-alanyl-D-alanine + UDP-N-acetyl-alpha-D-glucosamine = di-trans,octa-cis-undecaprenyl diphospho-[N-acetyl-alpha-D-glucosaminyl-(1-&gt;4)]-N-acetyl-alpha-D-muramoyl-L-alanyl-D-glutamyl-meso-2,6-diaminopimeloyl-D-alanyl-D-alanine + UDP + H(+). It functions in the pathway cell wall biogenesis; peptidoglycan biosynthesis. Its function is as follows. Cell wall formation. Catalyzes the transfer of a GlcNAc subunit on undecaprenyl-pyrophosphoryl-MurNAc-pentapeptide (lipid intermediate I) to form undecaprenyl-pyrophosphoryl-MurNAc-(pentapeptide)GlcNAc (lipid intermediate II). In Paracoccus denitrificans (strain Pd 1222), this protein is UDP-N-acetylglucosamine--N-acetylmuramyl-(pentapeptide) pyrophosphoryl-undecaprenol N-acetylglucosamine transferase.